An 820-amino-acid polypeptide reads, in one-letter code: Serine/threonine-protein phosphatase 4 regulatory subunit 3 (820 aa).

Positions 1–100 (MSDTRRRVKV…DEIWEKICQV (100 aa)) constitute a WH1 domain. Disordered regions lie at residues 687–711 (EDEEEEGEAVVPPVEKTKTEDDFPE) and 750–820 (AANG…RLGS). The segment covering 701-711 (EKTKTEDDFPE) has biased composition (basic and acidic residues). Residues 750 to 761 (AANGANSTNSKS) are compositionally biased toward polar residues. Residues 770 to 784 (SSNGSSSKNTSLTTT) show a composition bias toward low complexity. A compositionally biased stretch (acidic residues) spans 798 to 809 (YPDDEDEEEEED).

This sequence belongs to the SMEK family. In terms of assembly, serine/threonine-protein phosphatase 4 (PP4) occurs in different assemblies of the catalytic and one or more regulatory subunits.

Its function is as follows. Regulatory subunit of serine/threonine-protein phosphatase 4 (PP4). This chain is Serine/threonine-protein phosphatase 4 regulatory subunit 3, found in Xenopus tropicalis (Western clawed frog).